A 589-amino-acid polypeptide reads, in one-letter code: Putative ABC transporter ATP-binding protein MG015 (589 aa).

Transmembrane regions (helical) follow at residues 9–29, 66–86, 161–181, 251–271, 280–300, and 303–323; these read LLYVFLCIVLGILYGIANPIL, LTIVSVTVFVAYALIFVFNVA, LIFLLSPVIALISLSILATLI, IFLFSWFGFISNITYLVSISI, IPSFGISVINYSFMLSYIASL, and ITLALDQIFTLWNLVQLGVVS. The ABC transmembrane type-1 domain occupies 9 to 319; the sequence is LLYVFLCIVL…IFTLWNLVQL (311 aa). One can recognise an ABC transporter domain in the interval 352 to 586; the sequence is IRFENVAFGY…NGFYARLKQS (235 aa). ATP is bound at residue 385–392; sequence GPTGAGKS.

The protein belongs to the ABC transporter superfamily.

The protein resides in the cell membrane. The chain is Putative ABC transporter ATP-binding protein MG015 from Mycoplasma genitalium (strain ATCC 33530 / DSM 19775 / NCTC 10195 / G37) (Mycoplasmoides genitalium).